The following is a 699-amino-acid chain: Elongation factor G (699 aa).

One can recognise a tr-type G domain in the interval 10-292; sequence NRTRNIGIMA…AVIDYLPSPT (283 aa). Residues 19 to 26, 90 to 94, and 144 to 147 contribute to the GTP site; these read AHIDAGKT, DTPGH, and NKMD. Residues 292–312 are disordered; the sequence is TDVPAIRGEEDDGSEGSRSAS.

This sequence belongs to the TRAFAC class translation factor GTPase superfamily. Classic translation factor GTPase family. EF-G/EF-2 subfamily.

The protein resides in the cytoplasm. Catalyzes the GTP-dependent ribosomal translocation step during translation elongation. During this step, the ribosome changes from the pre-translocational (PRE) to the post-translocational (POST) state as the newly formed A-site-bound peptidyl-tRNA and P-site-bound deacylated tRNA move to the P and E sites, respectively. Catalyzes the coordinated movement of the two tRNA molecules, the mRNA and conformational changes in the ribosome. In Coxiella burnetii (strain RSA 331 / Henzerling II), this protein is Elongation factor G.